Here is a 192-residue protein sequence, read N- to C-terminus: UPF0312 protein Pput_4854 (192 aa).

An N-terminal signal peptide occupies residues 1–23 (MLKKTFAALALGTALLSAGQAMA).

The protein belongs to the UPF0312 family. Type 1 subfamily.

The protein localises to the periplasm. The chain is UPF0312 protein Pput_4854 from Pseudomonas putida (strain ATCC 700007 / DSM 6899 / JCM 31910 / BCRC 17059 / LMG 24140 / F1).